A 366-amino-acid chain; its full sequence is Chorismate synthase (366 aa).

2 residues coordinate NADP(+): Arg-48 and Arg-54. Residues 125-127, 238-239, Gly-278, 293-297, and Arg-319 contribute to the FMN site; these read RSS, NA, and KPTSS.

The protein belongs to the chorismate synthase family. Homotetramer. FMNH2 is required as a cofactor.

It carries out the reaction 5-O-(1-carboxyvinyl)-3-phosphoshikimate = chorismate + phosphate. Its pathway is metabolic intermediate biosynthesis; chorismate biosynthesis; chorismate from D-erythrose 4-phosphate and phosphoenolpyruvate: step 7/7. Catalyzes the anti-1,4-elimination of the C-3 phosphate and the C-6 proR hydrogen from 5-enolpyruvylshikimate-3-phosphate (EPSP) to yield chorismate, which is the branch point compound that serves as the starting substrate for the three terminal pathways of aromatic amino acid biosynthesis. This reaction introduces a second double bond into the aromatic ring system. The polypeptide is Chorismate synthase (Cellvibrio japonicus (strain Ueda107) (Pseudomonas fluorescens subsp. cellulosa)).